The chain runs to 240 residues: Chromatin structure-remodeling complex protein BSH (240 aa).

This sequence belongs to the SNF5 family. Interacts with SWI3A and SWI3B, but not with BRM. In terms of tissue distribution, expressed in roots, stems, leaves, flowers and siliques.

It localises to the nucleus. Component of a multiprotein complex equivalent of the yeast SWI/SNF complex, an ATP-dependent chromatin-remodeling complex, which is required for the positive and negative regulation of gene expression of a large number of genes. It changes chromatin structure by altering DNA-histone contacts within a nucleosome, leading eventually to a change in nucleosome position, thus facilitating or repressing binding of gene-specific transcription factors. The chain is Chromatin structure-remodeling complex protein BSH (BSH) from Arabidopsis thaliana (Mouse-ear cress).